The chain runs to 205 residues: Small ribosomal subunit protein uS2 (205 aa).

This sequence belongs to the universal ribosomal protein uS2 family.

The sequence is that of Small ribosomal subunit protein uS2 (rps2) from Aeropyrum pernix (strain ATCC 700893 / DSM 11879 / JCM 9820 / NBRC 100138 / K1).